The sequence spans 722 residues: Probable acyl-activating enzyme 16, chloroplastic (722 aa).

Residues 1–47 constitute a chloroplast transit peptide; that stretch reads MASTSLGASILVSHCSSAPEFQVSGMRLVFGYKAFGCRTSRRGFRVR.

This sequence belongs to the ATP-dependent AMP-binding enzyme family.

The protein resides in the plastid. It localises to the chloroplast. Functionally, may be involved in the activation of fatty acids to acyl-carrier-protein. In Arabidopsis thaliana (Mouse-ear cress), this protein is Probable acyl-activating enzyme 16, chloroplastic (AAE16).